Reading from the N-terminus, the 211-residue chain is Probable transcription repressor protein RGM1 (211 aa).

The Nuclear localization signal motif lies at Pro6 to Asp11. 2 C2H2-type zinc fingers span residues Tyr19 to His44 and Phe50 to His73. The disordered stretch occupies residues Asn178–Lys211. Positions Pro183 to Ser194 are enriched in low complexity.

The protein resides in the nucleus. This is Probable transcription repressor protein RGM1 (RGM1) from Saccharomyces cerevisiae (strain ATCC 204508 / S288c) (Baker's yeast).